Here is a 297-residue protein sequence, read N- to C-terminus: PAK4-inhibitor INKA2 (297 aa).

Disordered stretches follow at residues G82–R109, L175–L200, and T234–S285. Residues S92–S102 are compositionally biased toward low complexity. Residues E137–E180 form an inka box region. The span at R244–L253 shows a compositional bias: basic residues.

The protein belongs to the INKA family. As to quaternary structure, interacts with PAK4.

Its subcellular location is the nucleus. Inhibitor of the serine/threonine-protein kinase PAK4. Acts by binding PAK4 in a substrate-like manner, inhibiting the protein kinase activity. The sequence is that of PAK4-inhibitor INKA2 from Homo sapiens (Human).